The chain runs to 887 residues: Alanine--tRNA ligase (887 aa).

His581, His585, Cys683, and His687 together coordinate Zn(2+).

The protein belongs to the class-II aminoacyl-tRNA synthetase family. Zn(2+) is required as a cofactor.

The protein resides in the cytoplasm. The catalysed reaction is tRNA(Ala) + L-alanine + ATP = L-alanyl-tRNA(Ala) + AMP + diphosphate. Catalyzes the attachment of alanine to tRNA(Ala) in a two-step reaction: alanine is first activated by ATP to form Ala-AMP and then transferred to the acceptor end of tRNA(Ala). Also edits incorrectly charged Ser-tRNA(Ala) and Gly-tRNA(Ala) via its editing domain. The sequence is that of Alanine--tRNA ligase from Ehrlichia canis (strain Jake).